A 308-amino-acid polypeptide reads, in one-letter code: tRNA pseudouridine synthase B (308 aa).

Catalysis depends on aspartate 37, which acts as the Nucleophile.

Belongs to the pseudouridine synthase TruB family. Type 1 subfamily.

The enzyme catalyses uridine(55) in tRNA = pseudouridine(55) in tRNA. Responsible for synthesis of pseudouridine from uracil-55 in the psi GC loop of transfer RNAs. The protein is tRNA pseudouridine synthase B of Deinococcus radiodurans (strain ATCC 13939 / DSM 20539 / JCM 16871 / CCUG 27074 / LMG 4051 / NBRC 15346 / NCIMB 9279 / VKM B-1422 / R1).